We begin with the raw amino-acid sequence, 392 residues long: MTKEFEFLKAELNSMKENHTWQDIKQLESMQGPSVTVNHQKVIQLSSNNYLGFTSHPRLINAAQEAVQQYGAGTGSVRTIAGTFTMHQELEKKLAAFKKTEAALVFQSGFTTNQGVLSSILSKEDIVISDELNHASIIDGIRLTKADKKVYQHVNMSDLERVLRKSMNYRMRLIVTDGVFSMDGNIAPLPDIVELAEKYDAFVMVDDAHASGVLGENGRGTVNHFGLDGRVHIQVGTLSKAIGVLGGYAAGSKVLIDYLRHKGRPFLFSTSHPPAVTAACMEAIDVLLEEPEHMERLWENTAYFKAMLVKMGLTLTKSETPILPILIGDEGVAKQFSDQLLSRGVFAQSIVFPTVAKGKARIRTIITAEHTKDELDQALDVIEKTAKELQLL.

109–110 is a pyridoxal 5'-phosphate binding site; it reads GF. Residue histidine 134 coordinates substrate. Residues serine 181, 206–209, and 237–240 contribute to the pyridoxal 5'-phosphate site; these read DDAH and TLSK. Lysine 240 is modified (N6-(pyridoxal phosphate)lysine). Residue threonine 354 coordinates substrate.

This sequence belongs to the class-II pyridoxal-phosphate-dependent aminotransferase family. BioF subfamily. Homodimer. Pyridoxal 5'-phosphate is required as a cofactor.

It catalyses the reaction 6-carboxyhexanoyl-[ACP] + L-alanine + H(+) = (8S)-8-amino-7-oxononanoate + holo-[ACP] + CO2. It participates in cofactor biosynthesis; biotin biosynthesis. In terms of biological role, catalyzes the decarboxylative condensation of pimeloyl-[acyl-carrier protein] and L-alanine to produce 8-amino-7-oxononanoate (AON), [acyl-carrier protein], and carbon dioxide. This chain is 8-amino-7-oxononanoate synthase 1 (kbl), found in Bacillus subtilis (strain 168).